Here is a 96-residue protein sequence, read N- to C-terminus: Small ribosomal subunit protein bS6 (96 aa).

The protein belongs to the bacterial ribosomal protein bS6 family.

Its function is as follows. Binds together with bS18 to 16S ribosomal RNA. The sequence is that of Small ribosomal subunit protein bS6 from Streptococcus sanguinis (strain SK36).